A 126-amino-acid chain; its full sequence is Translation initiation factor 5A (126 aa).

The residue at position 36 (Lys-36) is a Hypusine.

Belongs to the eIF-5A family.

It localises to the cytoplasm. Functionally, functions by promoting the formation of the first peptide bond. This Haloarcula marismortui (strain ATCC 43049 / DSM 3752 / JCM 8966 / VKM B-1809) (Halobacterium marismortui) protein is Translation initiation factor 5A.